Consider the following 504-residue polypeptide: Signal recognition particle receptor FtsY (504 aa).

Disordered regions lie at residues M1 to L71 and E116 to T135. GTP contacts are provided by residues G308–T315, D391–R395, and T455–D458.

Belongs to the GTP-binding SRP family. FtsY subfamily. In terms of assembly, part of the signal recognition particle protein translocation system, which is composed of SRP and FtsY.

Its subcellular location is the cell inner membrane. The protein localises to the cytoplasm. It carries out the reaction GTP + H2O = GDP + phosphate + H(+). In terms of biological role, involved in targeting and insertion of nascent membrane proteins into the cytoplasmic membrane. Acts as a receptor for the complex formed by the signal recognition particle (SRP) and the ribosome-nascent chain (RNC). This chain is Signal recognition particle receptor FtsY, found in Synechocystis sp. (strain ATCC 27184 / PCC 6803 / Kazusa).